A 287-amino-acid polypeptide reads, in one-letter code: Inorganic pyrophosphatase (287 aa).

A Phosphothreonine modification is found at T65. R79 lines the diphosphate pocket. Y90 functions as the Proton donor in the catalytic mechanism. Mg(2+) is bound by residues D116, D121, and D153. A Glycyl lysine isopeptide (Lys-Gly) (interchain with G-Cter in ubiquitin) cross-link involves residue K239. Position 251 is a phosphothreonine (T251). At S266 the chain carries Phosphoserine. K279 is covalently cross-linked (Glycyl lysine isopeptide (Lys-Gly) (interchain with G-Cter in ubiquitin)). A Phosphoserine modification is found at S286.

This sequence belongs to the PPase family. In terms of assembly, homodimer. Requires Mg(2+) as cofactor.

The protein localises to the cytoplasm. The enzyme catalyses diphosphate + H2O = 2 phosphate + H(+). This chain is Inorganic pyrophosphatase (IPP1), found in Saccharomyces cerevisiae (strain ATCC 204508 / S288c) (Baker's yeast).